The sequence spans 102 residues: Small ribosomal subunit protein uS10 (102 aa).

Belongs to the universal ribosomal protein uS10 family. Part of the 30S ribosomal subunit.

Functionally, involved in the binding of tRNA to the ribosomes. The polypeptide is Small ribosomal subunit protein uS10 (Allorhizobium ampelinum (strain ATCC BAA-846 / DSM 112012 / S4) (Agrobacterium vitis (strain S4))).